Reading from the N-terminus, the 491-residue chain is 3-phosphoinositide-dependent protein kinase 1 (491 aa).

The Protein kinase domain maps to 44–311; that stretch reads FEFGKIYGVG…YVALKRHPFF (268 aa). Residues 54–56 and Lys73 contribute to the ATP site; that span reads SYS. Positions 75–119 are PIF-pocket; sequence MDKKFITKENKTAYVKLERIVLDQLEHPGIIKLYFTFQDTSSLYM. The PIF-binding stretch occupies residues 77–112; the sequence is KKFITKENKTAYVKLERIVLDQLEHPGIIKLYFTFQ. Residues 122–124 and Glu128 contribute to the ATP site; that span reads ESC. The active-site Proton acceptor is Asp167. ATP is bound at residue Glu171. Phosphoserine is present on Ser177. Residue Asp185 coordinates ATP. An activation loop region spans residues 185-222; it reads DFGSVKPMQDSQITVLPNAASDDKACTFVGTAAYVPPE. Residue Thr211 is modified to Phosphothreonine; by autocatalysis. Ser276 and Ser337 each carry phosphoserine. A disordered region spans residues 321–377; that stretch reads SQTPPKLAPDPASQTASPERDDTHGSPWNLTHIGDSLATQNEGHSAPPTSSESSGSI. Low complexity predominate over residues 365–376; that stretch reads SAPPTSSESSGS. A Phosphoserine modification is found at Ser382. The PH domain maps to 386–491; the sequence is FDSRWQQFLE…KKAIETLQNR (106 aa).

It belongs to the protein kinase superfamily. AGC Ser/Thr protein kinase family. PDPK1 subfamily. In terms of assembly, interacts with AGC1-5 and AGC1-7. Interacts with the C-terminal PIF domain of the protein kinases D6PK/AGC1-1, OXI1/AGC2-1 and PID. Phosphorylation on Thr-211 in the activation loop is required for full activity. PDK1 itself can autophosphorylate Thr-211, leading to its own activation. Ubiquitous.

It is found in the cytoplasm. The protein localises to the membrane. The catalysed reaction is L-seryl-[protein] + ATP = O-phospho-L-seryl-[protein] + ADP + H(+). It carries out the reaction L-threonyl-[protein] + ATP = O-phospho-L-threonyl-[protein] + ADP + H(+). With respect to regulation, activated by phosphatidic acid (PA) and in response to the fungal elicitor xylanase. May couple lipid signals to the activation-loop phosphorylation of several protein kinases of the so-called AGC kinase family. Interacts via its pleckstrin homology domain with phosphatidic acid, PtdIns3P and PtdIns(3,4)P2 and to a lesser extent with PtdIns(4,5)P2 and PtdIns4P. May play a general role in signaling processes controlling the pathogen/stress response, polar auxin transport and development. Transphosphorylates the AGC protein kinases OXI1/AGC2-1, PK1/S6K1, PK19/S6K2 and PID resulting in their activation. This Arabidopsis thaliana (Mouse-ear cress) protein is 3-phosphoinositide-dependent protein kinase 1 (PDPK1).